The chain runs to 199 residues: 3-isopropylmalate dehydratase small subunit (199 aa).

This sequence belongs to the LeuD family. LeuD type 1 subfamily. As to quaternary structure, heterodimer of LeuC and LeuD.

The catalysed reaction is (2R,3S)-3-isopropylmalate = (2S)-2-isopropylmalate. Its pathway is amino-acid biosynthesis; L-leucine biosynthesis; L-leucine from 3-methyl-2-oxobutanoate: step 2/4. Its function is as follows. Catalyzes the isomerization between 2-isopropylmalate and 3-isopropylmalate, via the formation of 2-isopropylmaleate. This chain is 3-isopropylmalate dehydratase small subunit, found in Leifsonia xyli subsp. xyli (strain CTCB07).